Here is a 211-residue protein sequence, read N- to C-terminus: Large ribosomal subunit protein uL3 (211 aa).

At Q150 the chain carries N5-methylglutamine.

This sequence belongs to the universal ribosomal protein uL3 family. Part of the 50S ribosomal subunit. Forms a cluster with proteins L14 and L19. In terms of processing, methylated by PrmB.

In terms of biological role, one of the primary rRNA binding proteins, it binds directly near the 3'-end of the 23S rRNA, where it nucleates assembly of the 50S subunit. The polypeptide is Large ribosomal subunit protein uL3 (Pseudomonas entomophila (strain L48)).